The sequence spans 184 residues: Large ribosomal subunit protein uL5 (184 aa).

Belongs to the universal ribosomal protein uL5 family. As to quaternary structure, part of the 50S ribosomal subunit; part of the 5S rRNA/L5/L18/L25 subcomplex. Contacts the 5S rRNA and the P site tRNA. Forms a bridge to the 30S subunit in the 70S ribosome.

This is one of the proteins that bind and probably mediate the attachment of the 5S RNA into the large ribosomal subunit, where it forms part of the central protuberance. In the 70S ribosome it contacts protein S13 of the 30S subunit (bridge B1b), connecting the 2 subunits; this bridge is implicated in subunit movement. Contacts the P site tRNA; the 5S rRNA and some of its associated proteins might help stabilize positioning of ribosome-bound tRNAs. The protein is Large ribosomal subunit protein uL5 of Ureaplasma parvum serovar 3 (strain ATCC 27815 / 27 / NCTC 11736).